The sequence spans 425 residues: Synaptotagmin-4 (425 aa).

The Vesicular segment spans residues 1-16; it reads MAPITTSREEFDEIPT. A helical transmembrane segment spans residues 17 to 37; it reads VVGIFSAFGLVFTVSLFAWIC. Residues 38 to 425 lie on the Cytoplasmic side of the membrane; sequence CQRKSSKSNK…IAKWHVLCDG (388 aa). Residues 73–83 are compositionally biased toward basic and acidic residues; it reads FGADDKNEVKN. Disordered stretches follow at residues 73–93 and 127–147; these read FGAD…NSLH and LEGE…SLTS. The residue at position 135 (Ser135) is a Phosphoserine; by MAPK8. Residues 135-146 show a composition bias toward low complexity; that stretch reads SPESLKSSTSLT. C2 domains follow at residues 153-274 and 287-420; these read KLGT…MLMN and GRGE…AKWH. Ca(2+)-binding residues include Asp246, Ser249, and Asp252.

It belongs to the synaptotagmin family. In terms of assembly, interacts with KIF1A; the interaction increases in presence of calcium and decreases when SYT4 is phosphorylated at Ser-135. It depends on Ca(2+) as a cofactor. Phosphorylation at Ser-135 by MAPK8/JNK1 reduces interaction with KIF1A and neuronal dense core vesicles mobility. In terms of tissue distribution, expressed in melanocytes. Expressed in brain. Within brain, expression is highest in hippocampus, with substantial levels also detected in amygdala and thalamus.

The protein resides in the cytoplasmic vesicle. It localises to the secretory vesicle. It is found in the neuronal dense core vesicle membrane. Its function is as follows. Synaptotagmin family member which does not bind Ca(2+). Involved in neuronal dense core vesicles (DCVs) mobility through its interaction with KIF1A. Upon increased neuronal activity, phosphorylation by MAPK8/JNK1 destabilizes the interaction with KIF1A and captures DCVs to synapses. Plays a role in dendrite formation by melanocytes. In Homo sapiens (Human), this protein is Synaptotagmin-4 (SYT4).